The chain runs to 1165 residues: Immunoglobulin superfamily member 3 (1165 aa).

An N-terminal signal peptide occupies residues 1-20 (MGTAAGLLLAALLLAGTSWA). The Extracellular segment spans residues 21-1095 (QREVNIQQGP…LQSTICANDA (1075 aa)). Ig-like C2-type domains follow at residues 22–139 (REVN…AKMN), 144–262 (PDTL…WFPL), 276–386 (PTDK…RGPS), 406–527 (PLRT…WQLL), 545–661 (FAVT…WTQL), 678–800 (PRLQ…EEAS), 810–934 (PDAN…WYKR), and 951–1067 (PALQ…WYLL). 2 cysteine pairs are disulfide-bonded: Cys-43-Cys-121 and Cys-168-Cys-246. The EWI motif motif lies at 250 to 252 (EWI). 6 disulfides stabilise this stretch: Cys-302-Cys-376, Cys-432-Cys-511, Cys-566-Cys-645, Cys-701-Cys-779, Cys-835-Cys-918, and Cys-974-Cys-1051. Residues 1096 to 1116 (LFYLVFFYPFPIFGILIITIL) traverse the membrane as a helical segment. Over 1117 to 1165 (LVRFRHRPTSKPGEGKNGVPLLWIKEPHLNYSPTCLEPPVLSIHPGTID) the chain is Cytoplasmic.

The protein resides in the membrane. In Xenopus laevis (African clawed frog), this protein is Immunoglobulin superfamily member 3 (igsf3).